Here is a 706-residue protein sequence, read N- to C-terminus: Probable serine/threonine-protein kinase zyg-1 (706 aa).

A Protein kinase domain is found at 13 to 249 (YSHLKEIGKG…LTQIVLSEFM (237 aa)). ATP is bound by residues 19 to 27 (IGKGGFGVV) and K41. D131 serves as the catalytic Proton acceptor. 2 stretches are compositionally biased toward basic and acidic residues: residues 261–290 (SREHSRDGRRQRSREPVRSSRDDRSRDGRA) and 323–336 (FDSERGRERDRDSG). 2 disordered regions span residues 261-351 (SREH…NRSQ) and 566-632 (SPSS…VAPS). The span at 566-579 (SPSSLMPSGSSQTS) shows a compositional bias: low complexity. Polar residues-rich tracts occupy residues 580 to 592 (RFPFSNLSNNQPS) and 603 to 629 (KPTSSQRASSANVQRRVSTDENSSPSV).

The protein belongs to the protein kinase superfamily. Ser/Thr protein kinase family. In terms of assembly, interacts with sel-10. In terms of processing, probably ubiquitinated by the SCF(sel-10) and SCF(lin-23) E3 ubiquitin ligase complexes, leading to its proteasomal degradation.

The protein localises to the cytoplasm. It is found in the cytoskeleton. It localises to the microtubule organizing center. Its subcellular location is the centrosome. The protein resides in the centriole. It catalyses the reaction L-seryl-[protein] + ATP = O-phospho-L-seryl-[protein] + ADP + H(+). The catalysed reaction is L-threonyl-[protein] + ATP = O-phospho-L-threonyl-[protein] + ADP + H(+). Its function is as follows. Protein kinase that plays a central role in centrosome duplication, control of centrosome size, spindle formation and nuclear envelope breakdown during cell divisions. Paternal copy is required to regulate synthesis of daughter centrioles prior to fertilization. Maternal copy regulates centrosome duplication during later cell cycles. Functions upstream of sas-5 and sas-6, and is required for their localization to the centrosome. Its role in nuclear envelope breakdown is mediated by the spindly-like protein spdl-1 and the RZZ complex, which in turn recruits the spindle checkpoint proteins mdf-1 and mdf-2, dynein and dynactin to unattached kinetochores. The chain is Probable serine/threonine-protein kinase zyg-1 from Caenorhabditis elegans.